The chain runs to 318 residues: Mitochondrial thiamine pyrophosphate carrier (318 aa).

Solcar repeat units follow at residues 13–106 (NSKL…LTEL), 116–202 (HQFS…LKRA), and 214–309 (TGNL…FCNL). A run of 5 helical transmembrane segments spans residues 19–39 (AVAGSVSGFVTRALISPLDVI), 87–107 (ILSIGYGAVQFLAFEELTELL), 122–142 (FVCGGLSAGTATLTVHPVDVL), 173–193 (VFYKGLTPTVIAIFPYAGLQF), and 220–240 (LLCGCGSGVISKTFTYPLDLI). The Substrate recognition motif lies at 241–246 (KKRLQV). A helical transmembrane segment spans residues 293-313 (ALSTGFMFFWYELFCNLFHCI).

The protein belongs to the mitochondrial carrier (TC 2.A.29) family.

The protein localises to the mitochondrion membrane. It catalyses the reaction thiamine phosphate(out) + thiamine diphosphate(in) = thiamine phosphate(in) + thiamine diphosphate(out). In terms of biological role, mitochondrial transporter mediating uptake of thiamine diphosphate into mitochondria. It is not clear if the antiporter activity is affected by the membrane potential or by the proton electrochemical gradient. This chain is Mitochondrial thiamine pyrophosphate carrier (Slc25a19), found in Mus musculus (Mouse).